The following is a 259-amino-acid chain: DNA-directed RNA polymerase subunit Rpo3 (259 aa).

It belongs to the archaeal Rpo3/eukaryotic RPB3 RNA polymerase subunit family. Part of the RNA polymerase complex.

The protein localises to the cytoplasm. It catalyses the reaction RNA(n) + a ribonucleoside 5'-triphosphate = RNA(n+1) + diphosphate. Its function is as follows. DNA-dependent RNA polymerase (RNAP) catalyzes the transcription of DNA into RNA using the four ribonucleoside triphosphates as substrates. This chain is DNA-directed RNA polymerase subunit Rpo3, found in Thermococcus kodakarensis (strain ATCC BAA-918 / JCM 12380 / KOD1) (Pyrococcus kodakaraensis (strain KOD1)).